An 88-amino-acid chain; its full sequence is Phosphocarrier protein HPr (88 aa).

Residues 1–88 (MEQQSYTIID…DVLSKEGLTE (88 aa)) form the HPr domain. Histidine 15 functions as the Pros-phosphohistidine intermediate in the catalytic mechanism. Serine 46 carries the post-translational modification Phosphoserine; by HPrK/P.

This sequence belongs to the HPr family.

Its subcellular location is the cytoplasm. Phosphorylation on Ser-46 inhibits the phosphoryl transfer from enzyme I to HPr. Functionally, general (non sugar-specific) component of the phosphoenolpyruvate-dependent sugar phosphotransferase system (sugar PTS). This major carbohydrate active-transport system catalyzes the phosphorylation of incoming sugar substrates concomitantly with their translocation across the cell membrane. The phosphoryl group from phosphoenolpyruvate (PEP) is transferred to the phosphoryl carrier protein HPr by enzyme I. Phospho-HPr then transfers it to the PTS EIIA domain. P-Ser-HPr interacts with the catabolite control protein A (CcpA), forming a complex that binds to DNA at the catabolite response elements cre, operator sites preceding a large number of catabolite-regulated genes. Thus, P-Ser-HPr is a corepressor in carbon catabolite repression (CCR), a mechanism that allows bacteria to coordinate and optimize the utilization of available carbon sources. P-Ser-HPr also plays a role in inducer exclusion, in which it probably interacts with several non-PTS permeases and inhibits their transport activity. This chain is Phosphocarrier protein HPr (ptsH), found in Staphylococcus carnosus.